The chain runs to 260 residues: MILNKIKVVVAGFRGKMGSTAVQMILNAPNFELVALLGRKEEVSEAFDVPVFNRKEELENIEADVWLDLTAPEVAYENTYFALEHGLRPVVGTTGFTEDEVARLIKFSREKELGGLIAPNFALGAVLLMQFSKQAVKYFPDVEIIELHHDGKKDAPSGTAVKTAELMAEERLAHHQGAVDEKESLVGARGAVLEGMRIHSVRLPGLVAHQEVIFGSKGEGLTLRHDSYDRSSFMTGIALGIRKVMTVSELKYGLEHFLDL.

NAD(+) is bound by residues 12-17 (GFRGKM), 92-94 (GTT), and 118-121 (APNF). Histidine 148 functions as the Proton donor/acceptor in the catalytic mechanism. Histidine 149 contributes to the (S)-2,3,4,5-tetrahydrodipicolinate binding site. The active-site Proton donor is lysine 152. 158–159 (GT) provides a ligand contact to (S)-2,3,4,5-tetrahydrodipicolinate.

It belongs to the DapB family.

The protein resides in the cytoplasm. It carries out the reaction (S)-2,3,4,5-tetrahydrodipicolinate + NAD(+) + H2O = (2S,4S)-4-hydroxy-2,3,4,5-tetrahydrodipicolinate + NADH + H(+). It catalyses the reaction (S)-2,3,4,5-tetrahydrodipicolinate + NADP(+) + H2O = (2S,4S)-4-hydroxy-2,3,4,5-tetrahydrodipicolinate + NADPH + H(+). Its pathway is amino-acid biosynthesis; L-lysine biosynthesis via DAP pathway; (S)-tetrahydrodipicolinate from L-aspartate: step 4/4. Its function is as follows. Catalyzes the conversion of 4-hydroxy-tetrahydrodipicolinate (HTPA) to tetrahydrodipicolinate. The sequence is that of 4-hydroxy-tetrahydrodipicolinate reductase from Lactococcus lactis subsp. cremoris (strain MG1363).